Consider the following 695-residue polypeptide: Exocyst complex component EXO70C2 (695 aa).

Residues 1 to 36 (MEKNDKDPDHDDKSKGDEKGDVVSDAHPSDDAHHQD) show a composition bias toward basic and acidic residues. 2 disordered regions span residues 1 to 71 (MEKN…EEAP) and 210 to 229 (VVTD…QDHQ). Residue T212 is modified to Phosphothreonine. Phosphoserine occurs at positions 215 and 217. The residue at position 446 (T446) is a Phosphothreonine. S494 and S605 each carry phosphoserine.

The protein belongs to the EXO70 family. In terms of assembly, interacts with ROH1A and ROH1D independently of its phosphorylation status. Post-translationally, phosphorylation on Ser and Thr residues promotes its ability to repress pollen tube growth and to regulate cellular architecture at the pollen tube tip. In terms of tissue distribution, expressed in anthers, pollen and root trichoblast cells. Also observed in anther tapetum.

Its subcellular location is the cytoplasm. Functionally, required for optimal tip growth of pollen tube; dose-dependent negative regulator of exocyst function in pollen tube growth and cellular architecture at the pollen tube tip, probably by modulating membrane trafficking and exocytosis dynamics. The polypeptide is Exocyst complex component EXO70C2 (Arabidopsis thaliana (Mouse-ear cress)).